Reading from the N-terminus, the 515-residue chain is SWI/SNF-related matrix-associated actin-dependent regulator of chromatin subfamily D member 1 (515 aa).

A disordered region spans residues 1–103 (MAARAGFQSV…SGMDQSRKRP (103 aa)). Residues 14–23 (GGAGASGGAG) show a composition bias toward gly residues. Positions 43–167 (APGQGLYRSP…DQTIMRKRLD (125 aa)) are interaction with ESR1, NR1H4, NR3C1, PGR and SMARCA4. Asymmetric dimethylarginine is present on residues arginine 68 and arginine 88. Lysine 101 is covalently cross-linked (Glycyl lysine isopeptide (Lys-Gly) (interchain with G-Cter in SUMO2)). Positions 168–474 (IQEALKRPIK…TMTDVVGNPE (307 aa)) are interaction with SMARCC1 and SMARCC2. The necessary for GR/NR3C1-mediated remodeling and transcription from chromatin; required for GR/NR3C1 interaction with the BRG1/SMARCA4 complex in vivo stretch occupies residues 180 to 515 (RKLRIFISNT…LEQALGIRNT (336 aa)). Threonine 203 is subject to Phosphothreonine. Lysine 223 carries the post-translational modification N6-acetyllysine. Positions 290 to 367 (YQPPQFKLDP…PQRLHALLMP (78 aa)) constitute an SWIB/MDM2 domain. Residues 412-440 (ASQQEIATLDNKIHETIETINQLKTQREF) are a coiled coil.

It belongs to the SMARCD family. Component of the multiprotein chromatin-remodeling complexes SWI/SNF: SWI/SNF-A (BAF), SWI/SNF-B (PBAF) and related complexes. The canonical complex contains a catalytic subunit (either SMARCA4/BRG1/BAF190A or SMARCA2/BRM/BAF190B), and at least SMARCE1, ACTL6A/BAF53, SMARCC1/BAF155, SMARCC2/BAF170, and SMARCB1/SNF5/BAF47. Other subunits specific to each of the complexes may also be present permitting several possible combinations developmentally and tissue specific. Component of the BAF complex, which includes at least actin (ACTB), ARID1A/BAF250A, ARID1B/BAF250B, SMARCA2/BRM, SMARCA4/BRG1/BAF190A, ACTL6A/BAF53, ACTL6B/BAF53B, SMARCE1/BAF57, SMARCC1/BAF155, SMARCC2/BAF170, SMARCB1/SNF5/INI1, and one or more SMARCD1/BAF60A, SMARCD2/BAF60B, or SMARCD3/BAF60C. In muscle cells, the BAF complex also contains DPF3. Component of neural progenitors-specific chromatin remodeling complex (npBAF complex) composed of at least, ARID1A/BAF250A or ARID1B/BAF250B, SMARCD1/BAF60A, SMARCD3/BAF60C, SMARCA2/BRM/BAF190B, SMARCA4/BRG1/BAF190A, SMARCB1/BAF47, SMARCC1/BAF155, SMARCE1/BAF57, SMARCC2/BAF170, PHF10/BAF45A, ACTL6A/BAF53A and actin. Component of neuron-specific chromatin remodeling complex (nBAF complex) composed of at least, ARID1A/BAF250A or ARID1B/BAF250B, SMARCD1/BAF60A, SMARCD3/BAF60C, SMARCA2/BRM/BAF190B, SMARCA4/BRG1/BAF190A, SMARCB1/BAF47, SMARCC1/BAF155, SMARCE1/BAF57, SMARCC2/BAF170, DPF1/BAF45B, DPF3/BAF45C, ACTL6B/BAF53B and actin. Component of the SWI/SNF-B (PBAF) chromatin remodeling complex, at least composed of SMARCA4/BRG1, SMARCB1/BAF47/SNF5, ACTL6A/BAF53A or ACTL6B/BAF53B, SMARCE1/BAF57, SMARCD1/BAF60A, SMARCD2/BAF60B, perhaps SMARCD3/BAF60C, SMARCC1/BAF155, SMARCC2/BAF170, PBRM1/BAF180, ARID2/BAF200 and actin (ACTB). Component of SWI/SNF (GBAF) subcomplex, which includes at least BICRA or BICRAL (mutually exclusive), BRD9, SS18, SMARCA2/BRM, SMARCA4/BRG1/BAF190A, ACTL6A/BAF53, SMARCC1/BAF155, and SMARCD1/BAF60A. Specifically interacts with the VDR heterodimer complex. Interacts with ESR1, NR3C1, NR1H4, PGR, SMARCA4, SMARCC1 and SMARCC2. Interacts with DPF2. Interacts with DPF3a (isoform 2 of DPF3/BAF45C) and with HDGFL2 in a DPF3a-dependent manner. Interacts with FOS, FOSB isoform 1 and 2, FOSL1 and FOSL2. Expressed in all tissues tested, including brain, heart, kidney, liver, lung, muscle, pancreas and placenta.

The protein localises to the nucleus. Its function is as follows. Involved in transcriptional activation and repression of select genes by chromatin remodeling (alteration of DNA-nucleosome topology). Component of SWI/SNF chromatin remodeling complexes that carry out key enzymatic activities, changing chromatin structure by altering DNA-histone contacts within a nucleosome in an ATP-dependent manner. Belongs to the neural progenitors-specific chromatin remodeling complex (npBAF complex) and the neuron-specific chromatin remodeling complex (nBAF complex). During neural development a switch from a stem/progenitor to a postmitotic chromatin remodeling mechanism occurs as neurons exit the cell cycle and become committed to their adult state. The transition from proliferating neural stem/progenitor cells to postmitotic neurons requires a switch in subunit composition of the npBAF and nBAF complexes. As neural progenitors exit mitosis and differentiate into neurons, npBAF complexes which contain ACTL6A/BAF53A and PHF10/BAF45A, are exchanged for homologous alternative ACTL6B/BAF53B and DPF1/BAF45B or DPF3/BAF45C subunits in neuron-specific complexes (nBAF). The npBAF complex is essential for the self-renewal/proliferative capacity of the multipotent neural stem cells. The nBAF complex along with CREST plays a role regulating the activity of genes essential for dendrite growth. Has a strong influence on vitamin D-mediated transcriptional activity from an enhancer vitamin D receptor element (VDRE). May be a link between mammalian SWI-SNF-like chromatin remodeling complexes and the vitamin D receptor (VDR) heterodimer. Mediates critical interactions between nuclear receptors and the BRG1/SMARCA4 chromatin-remodeling complex for transactivation. Interacts with AKIRIN2. The chain is SWI/SNF-related matrix-associated actin-dependent regulator of chromatin subfamily D member 1 from Homo sapiens (Human).